Here is an 89-residue protein sequence, read N- to C-terminus: Small ribosomal subunit protein uS15 (89 aa).

It belongs to the universal ribosomal protein uS15 family. In terms of assembly, part of the 30S ribosomal subunit. Forms a bridge to the 50S subunit in the 70S ribosome, contacting the 23S rRNA.

In terms of biological role, one of the primary rRNA binding proteins, it binds directly to 16S rRNA where it helps nucleate assembly of the platform of the 30S subunit by binding and bridging several RNA helices of the 16S rRNA. Its function is as follows. Forms an intersubunit bridge (bridge B4) with the 23S rRNA of the 50S subunit in the ribosome. This chain is Small ribosomal subunit protein uS15, found in Buchnera aphidicola subsp. Acyrthosiphon pisum (strain 5A).